Reading from the N-terminus, the 597-residue chain is Pheromone-processing carboxypeptidase KEX1 (597 aa).

The N-terminal stretch at 1 to 18 (MVTRHVLAAALAGSMTSA) is a signal peptide. Residues 19 to 508 (QRLHPTSQRA…QTGANSSQVH (490 aa)) lie on the Lumenal side of the membrane. Active-site residues include S186 and D377. N-linked (GlcNAc...) asparagine glycans are attached at residues N395 and N425. Residue H436 is part of the active site. N-linked (GlcNAc...) asparagine glycans are attached at residues N472 and N503. The helical transmembrane segment at 509-529 (IGIAWLWVALVIAVVSSVLAV) threads the bilayer. The Cytoplasmic segment spans residues 530–597 (CVTIVCIRNK…TSPRSRVTEV (68 aa)).

The protein belongs to the peptidase S10 family.

It localises to the golgi apparatus. It is found in the trans-Golgi network membrane. It carries out the reaction Preferential release of a C-terminal arginine or lysine residue.. In terms of biological role, protease with a carboxypeptidase B-like function involved in the C-terminal processing of the lysine and arginine residues from protein precursors. Promotes cell fusion and is involved in the programmed cell death. The sequence is that of Pheromone-processing carboxypeptidase KEX1 (KEX1) from Phytophthora infestans (strain T30-4) (Potato late blight agent).